We begin with the raw amino-acid sequence, 396 residues long: MAKAKFERNKPHCNIGTIGHVDHGKTSLTAAITKVLAEAGGATFTAYDQIDKAPEEKARGITISTSHVEYETPNRHYAHVDCPGHADYVKNMITGAAQMDGAILVVSAADGPMPQTREHILLARQVGVPAIVVFLNKCDMVDDPELLELVEMEVRELLSKYEFPGDDIPIIKGSALAALEDSDAKLGKEAVLELMKAVDAYIPQPERPVDQPFLMPVEDVFSISGRGTVVTGRVERGIVKVGEEIEIVGIRETQKTTVTGVEMFRKLLDQGQAGDNIGALLRGTKREDVERGQVLCKPGSVKPHTKFKAEAYILTKEEGGRHTPFFTNYRPQFYFRTTDVTGVVHLPAGTEMVMPGDNVAMEVHLIVPIAMEEKLRFAIREGGRTVGAGVVASIIE.

One can recognise a tr-type G domain in the interval 10-206 (KPHCNIGTIG…AVDAYIPQPE (197 aa)). Residues 19–26 (GHVDHGKT) form a G1 region. 19 to 26 (GHVDHGKT) serves as a coordination point for GTP. Residue threonine 26 coordinates Mg(2+). The interval 60 to 64 (GITIS) is G2. The segment at 81–84 (DCPG) is G3. Residues 81–85 (DCPGH) and 136–139 (NKCD) each bind GTP. Positions 136 to 139 (NKCD) are G4. A G5 region spans residues 174–176 (SAL).

It belongs to the TRAFAC class translation factor GTPase superfamily. Classic translation factor GTPase family. EF-Tu/EF-1A subfamily. In terms of assembly, monomer.

The protein resides in the cytoplasm. The catalysed reaction is GTP + H2O = GDP + phosphate + H(+). Functionally, GTP hydrolase that promotes the GTP-dependent binding of aminoacyl-tRNA to the A-site of ribosomes during protein biosynthesis. This Nitrobacter winogradskyi (strain ATCC 25391 / DSM 10237 / CIP 104748 / NCIMB 11846 / Nb-255) protein is Elongation factor Tu.